The chain runs to 424 residues: Folate-like transporter 3 (424 aa).

Asparagine 35 carries N-linked (GlcNAc...) asparagine glycosylation. The next 5 helical transmembrane spans lie at valine 55–isoleucine 75, leucine 78–leucine 98, leucine 101–valine 119, alanine 136–tryptophan 156, and isoleucine 164–proline 184. Asparagine 254 is a glycosylation site (N-linked (GlcNAc...) asparagine). Transmembrane regions (helical) follow at residues glycine 313 to isoleucine 333, leucine 361 to isoleucine 381, and phenylalanine 392 to isoleucine 412.

Belongs to the reduced folate carrier (RFC) transporter (TC 2.A.48) family.

It localises to the membrane. The polypeptide is Folate-like transporter 3 (folt-3) (Caenorhabditis elegans).